The sequence spans 394 residues: Short-chain dehydrogenase/reductase family 42E member 1 (394 aa).

Y153 functions as the Proton acceptor in the catalytic mechanism. Position 157 (K157) interacts with NAD(+). 2 helical membrane-spanning segments follow: residues 283–303 (LPLT…FIVG) and 367–387 (FMLW…TWIL).

It belongs to the 3-beta-HSD family.

The protein resides in the membrane. In Mus musculus (Mouse), this protein is Short-chain dehydrogenase/reductase family 42E member 1 (Sdr42e1).